Consider the following 175-residue polypeptide: B9 domain-containing protein 2 (175 aa).

A C2 B9-type domain is found at 2–118; the sequence is AEVHVIGQIM…DCPTWRPLGS (117 aa).

Belongs to the B9D family. As to quaternary structure, part of the tectonic-like complex (also named B9 complex). Interacts with TUBG1.

The protein localises to the cytoplasm. The protein resides in the cytoskeleton. It is found in the cilium basal body. Its subcellular location is the cilium axoneme. It localises to the nucleus. Functionally, component of the tectonic-like complex, a complex localized at the transition zone of primary cilia and acting as a barrier that prevents diffusion of transmembrane proteins between the cilia and plasma membranes. In Bos taurus (Bovine), this protein is B9 domain-containing protein 2 (B9D2).